The sequence spans 830 residues: BLOC-2 complex member HPS5 homolog (830 aa).

WD repeat units lie at residues R25–I64, S67–G106, and G114–I153. Residues D578–K604 adopt a coiled-coil conformation.

This sequence belongs to the HPS5 family.

Has a role in the biogenesis of eye pigment granules. Eye pigment granules are specialized forms of late endosomes or lysosomes. Biogenesis of pigment granules in the eye requires molecular components required for protein delivery to lysosomes. In Anopheles gambiae (African malaria mosquito), this protein is BLOC-2 complex member HPS5 homolog.